Consider the following 511-residue polypeptide: 2-isopropylmalate synthase (511 aa).

The Pyruvate carboxyltransferase domain maps to 5-267; it reads LIIFDTTLRD…DTDINATHIL (263 aa). Mn(2+)-binding residues include Asp14, His202, His204, and Asn238. The segment at 392 to 511 is regulatory domain; the sequence is KLVSLKVCTE…ATNKAQHPQI (120 aa).

The protein belongs to the alpha-IPM synthase/homocitrate synthase family. LeuA type 1 subfamily. Homodimer. Mn(2+) is required as a cofactor.

It is found in the cytoplasm. The enzyme catalyses 3-methyl-2-oxobutanoate + acetyl-CoA + H2O = (2S)-2-isopropylmalate + CoA + H(+). Its pathway is amino-acid biosynthesis; L-leucine biosynthesis; L-leucine from 3-methyl-2-oxobutanoate: step 1/4. In terms of biological role, catalyzes the condensation of the acetyl group of acetyl-CoA with 3-methyl-2-oxobutanoate (2-ketoisovalerate) to form 3-carboxy-3-hydroxy-4-methylpentanoate (2-isopropylmalate). The chain is 2-isopropylmalate synthase from Ruthia magnifica subsp. Calyptogena magnifica.